The following is a 314-amino-acid chain: Serine/threonine-protein phosphatase PP-Y (314 aa).

4 residues coordinate Mn(2+): D60, H62, D88, and N120. Catalysis depends on H121, which acts as the Proton donor. 2 residues coordinate Mn(2+): H169 and H244.

Belongs to the PPP phosphatase family. PP-Y subfamily. The cofactor is Mn(2+).

The enzyme catalyses O-phospho-L-seryl-[protein] + H2O = L-seryl-[protein] + phosphate. It carries out the reaction O-phospho-L-threonyl-[protein] + H2O = L-threonyl-[protein] + phosphate. The sequence is that of Serine/threonine-protein phosphatase PP-Y (PpY-55A) from Drosophila melanogaster (Fruit fly).